The chain runs to 126 residues: Small ribosomal subunit protein uS13 (126 aa).

The interval 96-126 is disordered; the sequence is LPVHGQRTHTNARTRKGPRRAIAGKKKAGKK.

The protein belongs to the universal ribosomal protein uS13 family. Part of the 30S ribosomal subunit. Forms a loose heterodimer with protein S19. Forms two bridges to the 50S subunit in the 70S ribosome.

Located at the top of the head of the 30S subunit, it contacts several helices of the 16S rRNA. In the 70S ribosome it contacts the 23S rRNA (bridge B1a) and protein L5 of the 50S subunit (bridge B1b), connecting the 2 subunits; these bridges are implicated in subunit movement. Contacts the tRNAs in the A and P-sites. The chain is Small ribosomal subunit protein uS13 from Frankia alni (strain DSM 45986 / CECT 9034 / ACN14a).